Consider the following 133-residue polypeptide: Fluoride-specific ion channel FluC 4 (133 aa).

3 helical membrane passes run 7–27 (ILVL…SGYV), 37–57 (WGTF…AGLG), and 60–80 (LGGI…LLGG). Residues glycine 79 and threonine 82 each contribute to the Na(+) site. Residues 107-127 (IVASALLCVLAVAAGYGGIMW) form a helical membrane-spanning segment.

Belongs to the fluoride channel Fluc/FEX (TC 1.A.43) family.

The protein localises to the cell inner membrane. It carries out the reaction fluoride(in) = fluoride(out). Na(+) is not transported, but it plays an essential structural role and its presence is essential for fluoride channel function. Functionally, fluoride-specific ion channel. Important for reducing fluoride concentration in the cell, thus reducing its toxicity. In Brucella abortus biovar 1 (strain 9-941), this protein is Fluoride-specific ion channel FluC 4.